A 242-amino-acid polypeptide reads, in one-letter code: Uridylate kinase (242 aa).

ATP is bound at residue 17–20; that stretch reads KLSG. Gly-59 lines the UMP pocket. Gly-60 and Arg-64 together coordinate ATP. Residues Asp-79 and 140–147 contribute to the UMP site; that span reads TGNPFFTT. The ATP site is built by Thr-167, Tyr-173, and Asp-176.

It belongs to the UMP kinase family. As to quaternary structure, homohexamer.

The protein resides in the cytoplasm. The catalysed reaction is UMP + ATP = UDP + ADP. The protein operates within pyrimidine metabolism; CTP biosynthesis via de novo pathway; UDP from UMP (UMPK route): step 1/1. With respect to regulation, inhibited by UTP. Its function is as follows. Catalyzes the reversible phosphorylation of UMP to UDP. In Marinobacter nauticus (strain ATCC 700491 / DSM 11845 / VT8) (Marinobacter aquaeolei), this protein is Uridylate kinase.